Here is a 292-residue protein sequence, read N- to C-terminus: ATP synthase gamma chain (292 aa).

The protein belongs to the ATPase gamma chain family. F-type ATPases have 2 components, CF(1) - the catalytic core - and CF(0) - the membrane proton channel. CF(1) has five subunits: alpha(3), beta(3), gamma(1), delta(1), epsilon(1). CF(0) has three main subunits: a, b and c.

It localises to the cell inner membrane. In terms of biological role, produces ATP from ADP in the presence of a proton gradient across the membrane. The gamma chain is believed to be important in regulating ATPase activity and the flow of protons through the CF(0) complex. This chain is ATP synthase gamma chain, found in Hyphomonas neptunium (strain ATCC 15444).